Reading from the N-terminus, the 228-residue chain is Homeobox-leucine zipper protein ATHB-53 (228 aa).

A disordered region spans residues 36–62 (DGGEESKPVKRRRKRRSKGSSATNEED). A compositionally biased stretch (basic residues) spans 44-53 (VKRRRKRRSK). Positions 68–127 (GMLRKRKLTDEQVNMLEYSFGNEHKLESGRKEKIAGELGLDPRQVAVWFQNRRARWKNKK) form a DNA-binding region, homeobox. Residues 128-156 (LEEEYAKLKNHHDNVVLGQCQLESQILKL) form a leucine-zipper region.

Belongs to the HD-ZIP homeobox family. Class I subfamily. As to expression, expressed in root meristem, late flowers and siliques.

The protein resides in the nucleus. Its function is as follows. Probable transcription factor that may play a regulatory role in auxin/cytokinin signaling during root development. The protein is Homeobox-leucine zipper protein ATHB-53 (ATHB-53) of Arabidopsis thaliana (Mouse-ear cress).